The following is a 149-amino-acid chain: D-aminoacyl-tRNA deacylase (149 aa).

The Gly-cisPro motif, important for rejection of L-amino acids signature appears at 137–138 (GP).

This sequence belongs to the DTD family. Homodimer.

The protein resides in the cytoplasm. It carries out the reaction glycyl-tRNA(Ala) + H2O = tRNA(Ala) + glycine + H(+). It catalyses the reaction a D-aminoacyl-tRNA + H2O = a tRNA + a D-alpha-amino acid + H(+). An aminoacyl-tRNA editing enzyme that deacylates mischarged D-aminoacyl-tRNAs. Also deacylates mischarged glycyl-tRNA(Ala), protecting cells against glycine mischarging by AlaRS. Acts via tRNA-based rather than protein-based catalysis; rejects L-amino acids rather than detecting D-amino acids in the active site. By recycling D-aminoacyl-tRNA to D-amino acids and free tRNA molecules, this enzyme counteracts the toxicity associated with the formation of D-aminoacyl-tRNA entities in vivo and helps enforce protein L-homochirality. This Syntrophotalea carbinolica (strain DSM 2380 / NBRC 103641 / GraBd1) (Pelobacter carbinolicus) protein is D-aminoacyl-tRNA deacylase.